The sequence spans 42 residues: Daisho1 (42 aa).

Positions 1–20 (MKFFQAAALLLAMFAALANA) are cleaved as a signal peptide. Residues 21–26 (EPVPQP) constitute a propeptide, removed by a dipeptidylpeptidase. Thr-41 carries the post-translational modification Threonine amide.

In terms of tissue distribution, hemolymph (at protein level).

Its subcellular location is the secreted. Peptide which plays a role in the humoral immune response to a subset of filamentous fungi, including F.oxysporum and F.verticillioides. This is Daisho1 from Drosophila melanogaster (Fruit fly).